Here is a 373-residue protein sequence, read N- to C-terminus: Queuine tRNA-ribosyltransferase (373 aa).

The active-site Proton acceptor is Asp93. Substrate is bound by residues 93–97 (DSGGF), Asp147, Gln189, and Gly216. Positions 247 to 253 (GVGAPED) are RNA binding. Asp266 functions as the Nucleophile in the catalytic mechanism. The RNA binding; important for wobble base 34 recognition stretch occupies residues 271-275 (TRIAR). Zn(2+) contacts are provided by Cys304, Cys306, Cys309, and His335.

The protein belongs to the queuine tRNA-ribosyltransferase family. As to quaternary structure, homodimer. Within each dimer, one monomer is responsible for RNA recognition and catalysis, while the other monomer binds to the replacement base PreQ1. It depends on Zn(2+) as a cofactor.

The catalysed reaction is 7-aminomethyl-7-carbaguanine + guanosine(34) in tRNA = 7-aminomethyl-7-carbaguanosine(34) in tRNA + guanine. It participates in tRNA modification; tRNA-queuosine biosynthesis. Functionally, catalyzes the base-exchange of a guanine (G) residue with the queuine precursor 7-aminomethyl-7-deazaguanine (PreQ1) at position 34 (anticodon wobble position) in tRNAs with GU(N) anticodons (tRNA-Asp, -Asn, -His and -Tyr). Catalysis occurs through a double-displacement mechanism. The nucleophile active site attacks the C1' of nucleotide 34 to detach the guanine base from the RNA, forming a covalent enzyme-RNA intermediate. The proton acceptor active site deprotonates the incoming PreQ1, allowing a nucleophilic attack on the C1' of the ribose to form the product. After dissociation, two additional enzymatic reactions on the tRNA convert PreQ1 to queuine (Q), resulting in the hypermodified nucleoside queuosine (7-(((4,5-cis-dihydroxy-2-cyclopenten-1-yl)amino)methyl)-7-deazaguanosine). This is Queuine tRNA-ribosyltransferase from Halothermothrix orenii (strain H 168 / OCM 544 / DSM 9562).